A 541-amino-acid polypeptide reads, in one-letter code: Zingiberene synthase (541 aa).

5 residues coordinate Mg(2+): D295, D299, N439, S443, and E447. Positions 295-299 (DDIID) match the DDXXD motif motif.

It belongs to the terpene synthase family. Requires Mg(2+) as cofactor. The cofactor is Mn(2+).

It localises to the cytoplasm. It catalyses the reaction (2E,6E)-farnesyl diphosphate = alpha-zingiberene + diphosphate. The protein operates within secondary metabolite biosynthesis; terpenoid biosynthesis. In terms of biological role, sesquiterpene synthase converting farnesyl diphosphate into two major products, zingiberene &gt; beta-sesquiphellandrene, and five minor products, 7-epi-sesquithujene, sesquisabinene A, (E)-alpha-bergamotene, (E)-beta-farnesene and beta-bisabolene. Can also accept geranyl diphosphate as substrate, producing nine monoterpenes, with myrcene, limonene and alpha-terpinolene as the major products. This is Zingiberene synthase (TPS1) from Sorghum bicolor (Sorghum).